We begin with the raw amino-acid sequence, 445 residues long: Crotonyl-CoA reductase (445 aa).

Zn(2+) is bound at residue E149.

The protein belongs to the zinc-containing alcohol dehydrogenase family. Crotonyl-CoA carboxylase/reductase subfamily. Homodimer. Zn(2+) is required as a cofactor.

It carries out the reaction butanoyl-CoA + NADP(+) = (2E)-butenoyl-CoA + NADPH + H(+). Inhibited by NADPH at concentrations above 200 uM, by MgCl (30%), by ZnCl(2) (55%), and by CoCl, MnCl and CaCl (100%). Also inhibited by iodoacetamide, N-ethylmaleamide, the thiol group inhibitor beta-chloromercuribenzoate, palmitoyl-CoA and myristoyl-CoA. Catalyzes the conversion of crotonyl-CoA to butyryl-CoA. It uses only NADP as electron donor. May have a role in providing butyryl-CoA as a starter unit for straight-chain fatty acid biosynthesis. The protein is Crotonyl-CoA reductase (ccrA2) of Streptomyces avermitilis (strain ATCC 31267 / DSM 46492 / JCM 5070 / NBRC 14893 / NCIMB 12804 / NRRL 8165 / MA-4680).